A 140-amino-acid polypeptide reads, in one-letter code: FK506-binding protein 2 (140 aa).

Residues 1 to 19 (MKFTTGLSVLLFFVLQVFA) form the signal peptide. One can recognise a PPIase FKBP-type domain in the interval 43 to 132 (GDVVSVHYTG…IFETELVDIQ (90 aa)).

The protein belongs to the FKBP-type PPIase family. FKBP2 subfamily.

The protein localises to the endoplasmic reticulum. It carries out the reaction [protein]-peptidylproline (omega=180) = [protein]-peptidylproline (omega=0). With respect to regulation, inhibited by both FK506 and rapamycin. Functionally, PPIases accelerate the folding of proteins. It catalyzes the cis-trans isomerization of proline imidic peptide bonds in oligopeptides. This Kluyveromyces lactis (strain ATCC 8585 / CBS 2359 / DSM 70799 / NBRC 1267 / NRRL Y-1140 / WM37) (Yeast) protein is FK506-binding protein 2 (FPR2).